The primary structure comprises 207 residues: ATP synthase subunit 5, mitochondrial (207 aa).

It belongs to the ATPase delta chain family. In terms of assembly, F-type ATPases have 2 components, CF(1) - the catalytic core - and CF(0) - the membrane proton channel. CF(1) has five subunits: alpha(3), beta(3), gamma(1), delta(1), epsilon(1). CF(0) has three main subunits: a, b and c.

It localises to the mitochondrion. The protein localises to the mitochondrion inner membrane. In terms of biological role, mitochondrial membrane ATP synthase (F(1)F(0) ATP synthase or Complex V) produces ATP from ADP in the presence of a proton gradient across the membrane which is generated by electron transport complexes of the respiratory chain. F-type ATPases consist of two structural domains, F(1) - containing the extramembraneous catalytic core and F(0) - containing the membrane proton channel, linked together by a central stalk and a peripheral stalk. During catalysis, ATP synthesis in the catalytic domain of F(1) is coupled via a rotary mechanism of the central stalk subunits to proton translocation. Part of the complex F(0) domain and the peripheric stalk, which acts as a stator to hold the catalytic alpha(3)beta(3) subcomplex and subunit a/ATP6 static relative to the rotary elements. The protein is ATP synthase subunit 5, mitochondrial (ATP5) of Candida glabrata (strain ATCC 2001 / BCRC 20586 / JCM 3761 / NBRC 0622 / NRRL Y-65 / CBS 138) (Yeast).